A 137-amino-acid polypeptide reads, in one-letter code: Fluoride-specific ion channel FluC 1 (137 aa).

The next 4 membrane-spanning stretches (helical) occupy residues 4 to 24, 37 to 57, 67 to 87, and 100 to 120; these read LIYI…YYLG, LATL…TTYI, VITG…TFSV, and IAFL…GLGY. Na(+) is bound by residues glycine 77 and threonine 80.

It belongs to the fluoride channel Fluc/FEX (TC 1.A.43) family.

The protein localises to the cell membrane. It catalyses the reaction fluoride(in) = fluoride(out). Its activity is regulated as follows. Na(+) is not transported, but it plays an essential structural role and its presence is essential for fluoride channel function. Fluoride-specific ion channel. Important for reducing fluoride concentration in the cell, thus reducing its toxicity. This chain is Fluoride-specific ion channel FluC 1, found in Bacillus thuringiensis subsp. konkukian (strain 97-27).